Consider the following 316-residue polypeptide: MTRKLKAAIIGSGNIGTDLMIKILRHGKNIEMGAMVGIDPHSDGLARASRMGVATTHEGVEGLTRMPGFAEIDFVFDATSAGAHVKNDAFLRSLKPGIRMIDLTPAAIGPYCIPVVNGDMHLDAPNVNMVTCGGQATIPMVAAVSRVAKVHYGEIIASIASKSAGPGTRANIDEFTETTSKAIEVVGGATKGKAIIIMNPAEPPLIMRDTVYTLSALADEAAIAASVEQMAAAVQSYVPGYRLKQQVQFDRIDTPIRIPGVGNALTGLKTSIFLEVEGAAHYLPAYAGNLDIMTSAGLRTAEHMAERMLATLAVAA.

12–15 (SGNI) is an NAD(+) binding site. The active-site Acyl-thioester intermediate is Cys-132. NAD(+) is bound by residues 163-171 (SAGPGTRAN) and Asn-289.

This sequence belongs to the acetaldehyde dehydrogenase family.

The catalysed reaction is acetaldehyde + NAD(+) + CoA = acetyl-CoA + NADH + H(+). The sequence is that of Acetaldehyde dehydrogenase 3 (mhpF) from Comamonas testosteroni (Pseudomonas testosteroni).